Consider the following 272-residue polypeptide: MKKRRSNLELLLQCFYRKKVYLSVFIVLALYCVNLLIENASSEKNVYDLLMQLTEFHPLTYTIIPTYLVVLTAHFSLGKMHHYLAFRCKDKRQWYNLNVSCIAIVTTGYSVLIAFIMLMQSLFVFRFENKWSTFAVDYYTYHATFLMNYSPLVYSIATLLLLWLLLFLLGLLFYVIFIWTKSPLVSLLFVFLLNIMNAAVTLGKIDTLTPVFFTDRVSIIQYVYKFDLNQDSFPYSIFVYWIMLIAVIYLIGWLVIQRVDFESEKGEKHHAS.

The next 6 helical transmembrane spans lie at 20 to 37 (VYLS…NLLI), 57 to 77 (HPLT…HFSL), 97 to 119 (LNVS…IMLM), 155 to 177 (SIAT…YVIF), 184 to 203 (LVSL…VTLG), and 234 to 256 (PYSI…WLVI).

Its subcellular location is the cell membrane. This is an uncharacterized protein from Halalkalibacterium halodurans (strain ATCC BAA-125 / DSM 18197 / FERM 7344 / JCM 9153 / C-125) (Bacillus halodurans).